The following is a 521-amino-acid chain: Probable protein phosphatase 2C 16 (521 aa).

Positions 21-327 (KYVVSSMQGW…ENTTVILVQF (307 aa)) constitute a PPM-type phosphatase domain. Mn(2+) is bound by residues aspartate 57, glycine 58, glutamine 276, and glutamate 318. Positions 354-431 (AAPAGASDTS…ADADDGAPKP (78 aa)) are disordered.

It belongs to the PP2C family. Mg(2+) is required as a cofactor. The cofactor is Mn(2+).

It carries out the reaction O-phospho-L-seryl-[protein] + H2O = L-seryl-[protein] + phosphate. The catalysed reaction is O-phospho-L-threonyl-[protein] + H2O = L-threonyl-[protein] + phosphate. The polypeptide is Probable protein phosphatase 2C 16 (Oryza sativa subsp. japonica (Rice)).